Reading from the N-terminus, the 380-residue chain is Bifunctional dihydropteroate synthase/dihydropteroate reductase (380 aa).

The interval 1 to 104 (MIVKRLNPDA…SQPFGLKHLA (104 aa)) is dihydropteroate reductase. A dihydropteroate synthase region spans residues 105 to 380 (QELKSHLKAP…KVFKSLEETD (276 aa)). Residues 119–371 (PQIMAVLNLT…DIDEHIDLIK (253 aa)) form the Pterin-binding domain. Asn126 lines the Mg(2+) pocket. (7,8-dihydropterin-6-yl)methyl diphosphate-binding positions include Asp202, Asn221, Asp289, Lys325, and 359–361 (RVH).

The protein in the C-terminal section; belongs to the DHPS family. It depends on FAD as a cofactor. FMN serves as cofactor. Requires Mg(2+) as cofactor.

The enzyme catalyses (7,8-dihydropterin-6-yl)methyl diphosphate + 4-aminobenzoate = 7,8-dihydropteroate + diphosphate. It catalyses the reaction (6S)-5,6,7,8-tetrahydropteroate + NAD(+) = 7,8-dihydropteroate + NADH + H(+). It functions in the pathway cofactor biosynthesis; tetrahydrofolate biosynthesis; 7,8-dihydrofolate from 2-amino-4-hydroxy-6-hydroxymethyl-7,8-dihydropteridine diphosphate and 4-aminobenzoate: step 1/2. Bifunctional enzyme that catalyzes the formation of dihydropteroate, the immediate precursor of folic acid and the reduction of dihydropteroate to tetrahydropteroate. In Helicobacter pylori (strain ATCC 700392 / 26695) (Campylobacter pylori), this protein is Bifunctional dihydropteroate synthase/dihydropteroate reductase.